A 154-amino-acid chain; its full sequence is MKILKGTASARGMRVAIVGACFNGPIADALVSGAQQTFLDLGGSEDMLTVVRVPGSFEIPCTLKKLLSSGMEYHAIVACGVLIKGETSHYDLIADQVAARVSELSVEYGLPITFSVITAPSVDSAWQRAGIKGSHLGVSGMETALEMANLFEKL.

5-amino-6-(D-ribitylamino)uracil-binding positions include F22, 56 to 58 (SFE), and 81 to 83 (VLI). 86-87 (ET) provides a ligand contact to (2S)-2-hydroxy-3-oxobutyl phosphate. Residue H89 is the Proton donor of the active site. F114 provides a ligand contact to 5-amino-6-(D-ribitylamino)uracil. R128 contributes to the (2S)-2-hydroxy-3-oxobutyl phosphate binding site.

The protein belongs to the DMRL synthase family.

It carries out the reaction (2S)-2-hydroxy-3-oxobutyl phosphate + 5-amino-6-(D-ribitylamino)uracil = 6,7-dimethyl-8-(1-D-ribityl)lumazine + phosphate + 2 H2O + H(+). The protein operates within cofactor biosynthesis; riboflavin biosynthesis; riboflavin from 2-hydroxy-3-oxobutyl phosphate and 5-amino-6-(D-ribitylamino)uracil: step 1/2. Its function is as follows. Catalyzes the formation of 6,7-dimethyl-8-ribityllumazine by condensation of 5-amino-6-(D-ribitylamino)uracil with 3,4-dihydroxy-2-butanone 4-phosphate. This is the penultimate step in the biosynthesis of riboflavin. The polypeptide is 6,7-dimethyl-8-ribityllumazine synthase (Chlamydia felis (strain Fe/C-56) (Chlamydophila felis)).